A 454-amino-acid polypeptide reads, in one-letter code: Ig mu chain C region (454 aa).

The CH1 stretch occupies residues 1–105; that stretch reads SPSSPTVFPL…NKDLRVPIPV (105 aa). Cys27 and Cys88 are oxidised to a cystine. Asn45, Asn112, Asn192, Asn210, Asn238, Asn257, and Asn280 each carry an N-linked (GlcNAc...) asparagine glycan. A CH2 region spans residues 106–218; it reads VTEMNPNVSV…KNVSSTCAAS (113 aa). Cys135 and Cys198 are oxidised to a cystine. Residues 219–324 are CH3; it reads PSTDIQAFPI…QKKFISKPRE (106 aa). 2 cysteine pairs are disulfide-bonded: Cys245-Cys304 and Cys352-Cys414. The tract at residues 325 to 454 is CH4; it reads MNKTPPAVYQ…IMSDAGGTCY (130 aa). N-linked (GlcNAc...) asparagine glycosylation is present at Asn441.

The sequence is that of Ig mu chain C region from Mesocricetus auratus (Golden hamster).